We begin with the raw amino-acid sequence, 627 residues long: Protein fem-1 homolog B (627 aa).

ANK repeat units follow at residues 45–74 (QRSTPLIIAARNGHTKVVRLLLEHYRVQTQ), 87–116 (DGATALWCAAGAGHFEVVKLLVSHGANVNH), 120–149 (TNSTPLRAACFDGRLDIVKYLVENNANISI), 153–182 (YDNTCLMIAAYKGHTDVVRYLLEQHADPNA), 186–215 (CGATALHFAAEAGHLEIVRELVKWKAAMMV), and 218–248 (HGMTPLKVAAESCKADVVELLLAHAGCNRRS). The TPR repeat unit spans residues 344-377 (SHPIIYRGAVYADNMEFEQCIKLWLHALHLRQKG). ANK repeat units lie at residues 483 to 527 (DGST…DVNA) and 531 to 568 (EGNSPLHLIVQYHRPISDFLTLHSIIISLVEAGAHTDM).

It belongs to the fem-1 family. As to quaternary structure, component of a CRL2 E3 ubiquitin-protein ligase complex, also named ECS (Elongin BC-CUL2/5-SOCS-box protein) complex.

Its subcellular location is the cytoplasm. It localises to the nucleus. Its pathway is protein modification; protein ubiquitination. Substrate-recognition component of a Cul2-RING (CRL2) E3 ubiquitin-protein ligase complex of the DesCEND (destruction via C-end degrons) pathway, which recognizes a C-degron located at the extreme C terminus of target proteins, leading to their ubiquitination and degradation. The C-degron recognized by the DesCEND pathway is usually a motif of less than ten residues and can be present in full-length proteins, truncated proteins or proteolytically cleaved forms. The CRL2(FEM1B) complex specifically recognizes proteins ending with -Gly-Leu-Asp-Arg, leading to their ubiquitination and degradation. This Gallus gallus (Chicken) protein is Protein fem-1 homolog B.